A 233-amino-acid polypeptide reads, in one-letter code: Phosphatidylserine decarboxylase proenzyme (233 aa).

The active-site Schiff-base intermediate with substrate; via pyruvic acid is Ser-201. Ser-201 carries the post-translational modification Pyruvic acid (Ser); by autocatalysis.

Belongs to the phosphatidylserine decarboxylase family. PSD-A subfamily. As to quaternary structure, heterodimer of a large membrane-associated beta subunit and a small pyruvoyl-containing alpha subunit. The cofactor is pyruvate. Post-translationally, is synthesized initially as an inactive proenzyme. Formation of the active enzyme involves a self-maturation process in which the active site pyruvoyl group is generated from an internal serine residue via an autocatalytic post-translational modification. Two non-identical subunits are generated from the proenzyme in this reaction, and the pyruvate is formed at the N-terminus of the alpha chain, which is derived from the carboxyl end of the proenzyme. The post-translation cleavage follows an unusual pathway, termed non-hydrolytic serinolysis, in which the side chain hydroxyl group of the serine supplies its oxygen atom to form the C-terminus of the beta chain, while the remainder of the serine residue undergoes an oxidative deamination to produce ammonia and the pyruvoyl prosthetic group on the alpha chain.

Its subcellular location is the cell membrane. The catalysed reaction is a 1,2-diacyl-sn-glycero-3-phospho-L-serine + H(+) = a 1,2-diacyl-sn-glycero-3-phosphoethanolamine + CO2. It functions in the pathway phospholipid metabolism; phosphatidylethanolamine biosynthesis; phosphatidylethanolamine from CDP-diacylglycerol: step 2/2. Catalyzes the formation of phosphatidylethanolamine (PtdEtn) from phosphatidylserine (PtdSer). The polypeptide is Phosphatidylserine decarboxylase proenzyme (Mycolicibacterium vanbaalenii (strain DSM 7251 / JCM 13017 / BCRC 16820 / KCTC 9966 / NRRL B-24157 / PYR-1) (Mycobacterium vanbaalenii)).